The primary structure comprises 827 residues: Periplasmic nitrate reductase (827 aa).

The segment at residues 1–32 (MELSRRDFMKANAAVAAAAAAGIVLPVKNVQA) is a signal peptide (tat-type signal). One can recognise a 4Fe-4S Mo/W bis-MGD-type domain in the interval 37 to 93 (IKWDKAPCRFCGTGCSVLVGTKDGRVVATQGDPDAEVNRGLNCIKGYFLSKIMYGAD). Residues C44, C47, C51, and C79 each contribute to the [4Fe-4S] cluster site. Mo-bis(molybdopterin guanine dinucleotide) is bound by residues K81, Q148, N173, C177, 210–217 (WGSNMAEM), 241–245 (STFEH), M371, Q375, N481, 507–508 (SD), K530, D557, and 717–726 (TGRVLEHWHT). Substrate is bound at residue F793. The Mo-bis(molybdopterin guanine dinucleotide) site is built by N801 and K818.

This sequence belongs to the prokaryotic molybdopterin-containing oxidoreductase family. NasA/NapA/NarB subfamily. Component of the periplasmic nitrate reductase NapAB complex composed of NapA and NapB. The cofactor is [4Fe-4S] cluster. Mo-bis(molybdopterin guanine dinucleotide) is required as a cofactor. In terms of processing, predicted to be exported by the Tat system. The position of the signal peptide cleavage has not been experimentally proven.

It localises to the periplasm. It carries out the reaction 2 Fe(II)-[cytochrome] + nitrate + 2 H(+) = 2 Fe(III)-[cytochrome] + nitrite + H2O. Catalytic subunit of the periplasmic nitrate reductase complex NapAB. Receives electrons from NapB and catalyzes the reduction of nitrate to nitrite. In Haemophilus ducreyi (strain 35000HP / ATCC 700724), this protein is Periplasmic nitrate reductase.